The primary structure comprises 460 residues: Cobyrinate a,c-diamide synthase (460 aa).

The GATase cobBQ-type domain maps to 248–440 (KIAVARDAAF…THFHFGSSTK (193 aa)). Catalysis depends on cysteine 331, which acts as the Nucleophile.

It belongs to the CobB/CbiA family. The cofactor is Mg(2+).

The catalysed reaction is cob(II)yrinate + 2 L-glutamine + 2 ATP + 2 H2O = cob(II)yrinate a,c diamide + 2 L-glutamate + 2 ADP + 2 phosphate + 2 H(+). It functions in the pathway cofactor biosynthesis; adenosylcobalamin biosynthesis; cob(II)yrinate a,c-diamide from sirohydrochlorin (anaerobic route): step 10/10. Its function is as follows. Catalyzes the ATP-dependent amidation of the two carboxylate groups at positions a and c of cobyrinate, using either L-glutamine or ammonia as the nitrogen source. This Priestia megaterium (Bacillus megaterium) protein is Cobyrinate a,c-diamide synthase.